The primary structure comprises 382 residues: Queuine tRNA-ribosyltransferase (382 aa).

D94 (proton acceptor) is an active-site residue. Substrate contacts are provided by residues D94–F98, D148, Q192, and G219. The tract at residues G250–D256 is RNA binding. D269 serves as the catalytic Nucleophile. The RNA binding; important for wobble base 34 recognition stretch occupies residues T274–R278. Positions 307, 309, 312, and 338 each coordinate Zn(2+).

It belongs to the queuine tRNA-ribosyltransferase family. As to quaternary structure, homodimer. Within each dimer, one monomer is responsible for RNA recognition and catalysis, while the other monomer binds to the replacement base PreQ1. Zn(2+) is required as a cofactor.

It carries out the reaction 7-aminomethyl-7-carbaguanine + guanosine(34) in tRNA = 7-aminomethyl-7-carbaguanosine(34) in tRNA + guanine. The protein operates within tRNA modification; tRNA-queuosine biosynthesis. In terms of biological role, catalyzes the base-exchange of a guanine (G) residue with the queuine precursor 7-aminomethyl-7-deazaguanine (PreQ1) at position 34 (anticodon wobble position) in tRNAs with GU(N) anticodons (tRNA-Asp, -Asn, -His and -Tyr). Catalysis occurs through a double-displacement mechanism. The nucleophile active site attacks the C1' of nucleotide 34 to detach the guanine base from the RNA, forming a covalent enzyme-RNA intermediate. The proton acceptor active site deprotonates the incoming PreQ1, allowing a nucleophilic attack on the C1' of the ribose to form the product. After dissociation, two additional enzymatic reactions on the tRNA convert PreQ1 to queuine (Q), resulting in the hypermodified nucleoside queuosine (7-(((4,5-cis-dihydroxy-2-cyclopenten-1-yl)amino)methyl)-7-deazaguanosine). This Haemophilus ducreyi (strain 35000HP / ATCC 700724) protein is Queuine tRNA-ribosyltransferase.